A 67-amino-acid polypeptide reads, in one-letter code: Small ribosomal subunit protein bS21 (67 aa).

Belongs to the bacterial ribosomal protein bS21 family.

The chain is Small ribosomal subunit protein bS21 from Rhodospirillum centenum (strain ATCC 51521 / SW).